The following is a 175-amino-acid chain: NADH-ubiquinone oxidoreductase chain 6 (175 aa).

5 helical membrane passes run 1–21, 27–47, 49–69, 88–108, and 149–169; these read MMTYIVFILSTVFVVGFVGFS, VYGGVGLIVSGGVGCGIIMNF, GSFLGLMVFLIYLGGMMVVFG, VVFGAFVFGLFMEMLLVLYVL, and YGMWLVVVTGWSLFIAVVVVM.

It belongs to the complex I subunit 6 family. Core subunit of respiratory chain NADH dehydrogenase (Complex I) which is composed of 45 different subunits.

It localises to the mitochondrion inner membrane. The enzyme catalyses a ubiquinone + NADH + 5 H(+)(in) = a ubiquinol + NAD(+) + 4 H(+)(out). In terms of biological role, core subunit of the mitochondrial membrane respiratory chain NADH dehydrogenase (Complex I) which catalyzes electron transfer from NADH through the respiratory chain, using ubiquinone as an electron acceptor. Essential for the catalytic activity and assembly of complex I. This chain is NADH-ubiquinone oxidoreductase chain 6 (MT-ND6), found in Pteropus scapulatus (Little red flying fox).